The sequence spans 177 residues: Large ribosomal subunit protein uL6 (177 aa).

It belongs to the universal ribosomal protein uL6 family. Part of the 50S ribosomal subunit.

Functionally, this protein binds to the 23S rRNA, and is important in its secondary structure. It is located near the subunit interface in the base of the L7/L12 stalk, and near the tRNA binding site of the peptidyltransferase center. This chain is Large ribosomal subunit protein uL6, found in Bordetella petrii (strain ATCC BAA-461 / DSM 12804 / CCUG 43448).